Here is a 378-residue protein sequence, read N- to C-terminus: Forkhead box protein I1 (378 aa).

Disordered stretches follow at residues 1-26 (MSSF…QEPP) and 208-278 (DNGN…APCL). The segment at residues 123–217 (RPPYSYSALI…DNGNFRRKRK (95 aa)) is a DNA-binding region (fork-head). Polar residues predominate over residues 236 to 248 (SSLPVDSPKTTEP).

In terms of tissue distribution, expressed in kidney.

The protein localises to the nucleus. Transcriptional activator required for the development of normal hearing, sense of balance and kidney function. Required for the expression of SLC26A4/PDS, JAG1 and COCH in a subset of epithelial cells and the development of the endolymphatic system in the inner ear. Also required for the expression of SLC4A1/AE1, SLC4A9/AE4, ATP6V1B1 and the differentiation of intercalated cells in the epithelium of distal renal tubules. This is Forkhead box protein I1 (FOXI1) from Homo sapiens (Human).